Consider the following 96-residue polypeptide: Small ribosomal subunit protein bS16 (96 aa).

The protein belongs to the bacterial ribosomal protein bS16 family.

The polypeptide is Small ribosomal subunit protein bS16 (Oenococcus oeni (strain ATCC BAA-331 / PSU-1)).